The chain runs to 87 residues: Small ribosomal subunit protein bS20 (87 aa).

The protein belongs to the bacterial ribosomal protein bS20 family.

Binds directly to 16S ribosomal RNA. The sequence is that of Small ribosomal subunit protein bS20 from Clostridium botulinum (strain Alaska E43 / Type E3).